Here is a 307-residue protein sequence, read N- to C-terminus: Cuticle collagen 36 (307 aa).

Disordered stretches follow at residues 76–102 (TRSRRDAGYKEGSGSGGSGSGGYGGPT) and 116–307 (QQGP…PPGY). Residues 86-102 (EGSGSGGSGSGGYGGPT) are compositionally biased toward gly residues. 6 triple-helical region regions span residues 89–105 (GSGGSGSGGYGGPTGAG), 118–150 (GPAGPPGPAGDTGPNGNDGHHGAPGVPGKEGSI), 167–187 (GPQGAVGQQGPKGPPGPKGKS), 194–226 (GKNGEPGMIGPPGPPGGVGEPGPPGPAGQPGRV), 231–257 (GAAGPAGPRGVKGPPGPKGLPGIAGLT), and 260–295 (GGQGPPGDAGGPGPVGGQGPPGPQGPQGPPGDEGSC). Residues 157-168 (PSEPCIICPPGP) show a composition bias toward pro residues. Residues 186–196 (KSQERAADGKN) are compositionally biased toward basic and acidic residues. The span at 202 to 220 (IGPPGPPGGVGEPGPPGPA) shows a compositional bias: pro residues. Low complexity predominate over residues 231–242 (GAAGPAGPRGVK). A compositionally biased stretch (gly residues) spans 258–278 (EIGGQGPPGDAGGPGPVGGQG). Residues 279-288 (PPGPQGPQGP) are compositionally biased toward pro residues.

This sequence belongs to the cuticular collagen family. Collagen polypeptide chains are complexed within the cuticle by disulfide bonds and other types of covalent cross-links.

Its function is as follows. Nematode cuticles are composed largely of collagen-like proteins. The cuticle functions both as an exoskeleton and as a barrier to protect the worm from its environment. The sequence is that of Cuticle collagen 36 (col-36) from Caenorhabditis elegans.